Reading from the N-terminus, the 219-residue chain is MKAYLFIFIFLFLLNFLILFFVLKTELIVSSLIAGGYALFVSAFTSYVYTKKVEKLLGVLLYFAEFVYENRQNLEGSVFYSPLYEELRDIVSYIEGGIKNVKSSLEKQLADVHVEYTEVVEKLGQIMEVVERLKQGEIEYGALPTGLDPAGALGEILRESLSEIAKKIDNIKRKIYELDDTIKKVKNYAEAGEEELVKAEITRTKSILEEIEKELEFFK.

The helical transmembrane segment at 28–50 threads the bilayer; it reads IVSSLIAGGYALFVSAFTSYVYT. The stretch at 155 to 218 forms a coiled coil; the sequence is EILRESLSEI…EEIEKELEFF (64 aa).

The protein resides in the membrane. This is an uncharacterized protein from Aquifex aeolicus (strain VF5).